We begin with the raw amino-acid sequence, 366 residues long: Mitogen-activated protein kinase sakA (366 aa).

The Protein kinase domain occupies 20-299 (YTDLQPVGMG…AGEALAHEYL (280 aa)). Residues 26–34 (VGMGAFGLV) and lysine 49 contribute to the ATP site. Aspartate 141 functions as the Proton acceptor in the catalytic mechanism. A Phosphothreonine modification is found at threonine 171. The short motif at 171-173 (TGY) is the TXY element. Tyrosine 173 is subject to Phosphotyrosine.

This sequence belongs to the protein kinase superfamily. Ser/Thr protein kinase family. MAP kinase subfamily. HOG1 sub-subfamily. Interacts with the AGC kinase ypkA. Interacts with sakA upon osmotic and cell wall stresses. The cofactor is Mg(2+). Post-translationally, dually phosphorylated on Thr-171 and Tyr-173, which activates the enzyme. Environmental stresses such as high temperature, osmotic stress, cold stress or ethanol stress modulate the activation of sakA via phosphorylation.

The protein resides in the cytoplasm. Its subcellular location is the nucleus. It carries out the reaction L-seryl-[protein] + ATP = O-phospho-L-seryl-[protein] + ADP + H(+). The enzyme catalyses L-threonyl-[protein] + ATP = O-phospho-L-threonyl-[protein] + ADP + H(+). Its activity is regulated as follows. Activated by tyrosine and threonine phosphorylation. Deactivated by protein phosphatase 2C homolog 2 ptcB. Proline-directed serine/threonine-protein kinase involved in a signal transduction pathway that is activated by changes in the osmolarity of the extracellular environment. Controls osmotic regulation of transcription of target genes. Involved in environmental stress response. With mpkC, plays a redundant or cooperative role in the conidial stress resistance. Also plays a supportive role in osmotic stress adaptation when sakA is deficient. Involved in paradoxical growth, the cell wall integrity (CWI) pathway and biofilm formation. Also collaborates with mpkC to allow ful virulence in a neutropenic murine model ofinvasive pulmonary aspergillosis. MpkC and sakA have both independent and collaborative functions during the transcriptional response to transient osmotic stress and sakA not only seems to modulate pathways involved in nucleotide, fatty acid, nitrogen and organic acid biosynthesis but is also important for the activation of genes involved in mitochondrial and endoplasmic reticulum functions. The polypeptide is Mitogen-activated protein kinase sakA (Aspergillus fumigatus (strain ATCC MYA-4609 / CBS 101355 / FGSC A1100 / Af293) (Neosartorya fumigata)).